The following is a 131-amino-acid chain: Ribosome-binding factor A (131 aa).

This sequence belongs to the RbfA family. Monomer. Binds 30S ribosomal subunits, but not 50S ribosomal subunits or 70S ribosomes.

It localises to the cytoplasm. Functionally, one of several proteins that assist in the late maturation steps of the functional core of the 30S ribosomal subunit. Associates with free 30S ribosomal subunits (but not with 30S subunits that are part of 70S ribosomes or polysomes). Required for efficient processing of 16S rRNA. May interact with the 5'-terminal helix region of 16S rRNA. In Ruegeria pomeroyi (strain ATCC 700808 / DSM 15171 / DSS-3) (Silicibacter pomeroyi), this protein is Ribosome-binding factor A.